The chain runs to 371 residues: Putative glutamate--cysteine ligase 2 (371 aa).

The protein belongs to the glutamate--cysteine ligase type 2 family. YbdK subfamily.

The catalysed reaction is L-cysteine + L-glutamate + ATP = gamma-L-glutamyl-L-cysteine + ADP + phosphate + H(+). In terms of biological role, ATP-dependent carboxylate-amine ligase which exhibits weak glutamate--cysteine ligase activity. The sequence is that of Putative glutamate--cysteine ligase 2 from Cupriavidus necator (strain ATCC 17699 / DSM 428 / KCTC 22496 / NCIMB 10442 / H16 / Stanier 337) (Ralstonia eutropha).